The chain runs to 577 residues: Putative laccase-1 (577 aa).

A signal peptide spans Met-1–Gly-28. 2 consecutive Plastocyanin-like domains span residues Phe-37–Gly-153 and Lys-163–Ser-316. N-linked (GlcNAc...) asparagine glycosylation is found at Asn-42 and Asn-83. Positions 87 and 89 each coordinate Cu cation. A glycan (N-linked (GlcNAc...) asparagine) is linked at Asn-115. 2 residues coordinate Cu cation: His-132 and His-134. Asn-276, Asn-304, Asn-382, and Asn-402 each carry an N-linked (GlcNAc...) asparagine glycan. The region spanning Asp-442–Lys-561 is the Plastocyanin-like 3 domain. Cu cation is bound by residues His-478, His-481, His-483, His-540, Cys-541, His-542, His-546, and Met-551.

This sequence belongs to the multicopper oxidase family. Requires Cu cation as cofactor.

The protein resides in the secreted. The protein localises to the extracellular space. Its subcellular location is the apoplast. The catalysed reaction is 4 hydroquinone + O2 = 4 benzosemiquinone + 2 H2O. Functionally, lignin degradation and detoxification of lignin-derived products. The sequence is that of Putative laccase-1 (LAC1) from Oryza sativa subsp. japonica (Rice).